The sequence spans 139 residues: Aspartate 1-decarboxylase (139 aa).

Ser-25 acts as the Schiff-base intermediate with substrate; via pyruvic acid in catalysis. Ser-25 bears the Pyruvic acid (Ser) mark. Residue Thr-57 participates in substrate binding. Tyr-58 acts as the Proton donor in catalysis. 73-75 (GAA) contributes to the substrate binding site.

It belongs to the PanD family. As to quaternary structure, heterooctamer of four alpha and four beta subunits. The cofactor is pyruvate. Is synthesized initially as an inactive proenzyme, which is activated by self-cleavage at a specific serine bond to produce a beta-subunit with a hydroxyl group at its C-terminus and an alpha-subunit with a pyruvoyl group at its N-terminus.

The protein resides in the cytoplasm. It catalyses the reaction L-aspartate + H(+) = beta-alanine + CO2. It participates in cofactor biosynthesis; (R)-pantothenate biosynthesis; beta-alanine from L-aspartate: step 1/1. Its function is as follows. Catalyzes the pyruvoyl-dependent decarboxylation of aspartate to produce beta-alanine. In Mycobacterium bovis (strain BCG / Tokyo 172 / ATCC 35737 / TMC 1019), this protein is Aspartate 1-decarboxylase.